A 363-amino-acid chain; its full sequence is Type 3 secretion system translocon protein SctB (363 aa).

Over residues 1–16 (MEIQNTKPTQTLYTDI) the composition is skewed to polar residues. A disordered region spans residues 1 to 30 (MEIQNTKPTQTLYTDISTKQTQSSSETQKS). Positions 17–30 (STKQTQSSSETQKS) are enriched in low complexity. The interval 33 to 73 (YQQIAAHIPLNVGKNPVLTTTLNDDQLLKLSEQVQHDSEII) is ipgC chaperone binding domain. Residues 99-120 (ISSLSSNAVSLIISVAVLLSAL) form a helical membrane-spanning segment.

This sequence belongs to the SctB/SipC family. In terms of assembly, the core secretion machinery of the T3SS is composed of approximately 20 different proteins, including cytoplasmic components, a base, an export apparatus and a needle. This subunit is involved in the formation of a pore, called the translocon, in host membrane. Interacts with IpaB/SctE. Interacts with the molecular chaperone IpgC, which prevents premature association with IpaB/SctE within the cytoplasm of Shigella cells. Does not interact with CDC42 or RAC1 GTPases in vitro.

Its subcellular location is the secreted. The protein resides in the host membrane. With respect to regulation, interaction with the membrane is affected by the pH. Component of the type III secretion system (T3SS), also called injectisome, which is used to inject bacterial effector proteins into eukaryotic host cells. IpaB/SctE and IpaC/SctB are inserted into the host membrane where they form a pore and allow the translocation of effector proteins into the cytosol of target cells. Induction and secretion of IpaC/SctB comprise the final step in triggering the induction of full type III secretion. In terms of biological role, required for efficient dissemination. Necessary for lysis of the two cellular membranes that surround bacteria in protrusions during cell-to-cell spread. Contribute to actin nucleation in vitro, which may be a necessary step in Shigella invasion. The sequence is that of Type 3 secretion system translocon protein SctB from Shigella flexneri.